Here is a 233-residue protein sequence, read N- to C-terminus: UPF0173 metal-dependent hydrolase Acid345_3437 (233 aa).

The protein belongs to the UPF0173 family.

The polypeptide is UPF0173 metal-dependent hydrolase Acid345_3437 (Koribacter versatilis (strain Ellin345)).